The following is a 204-amino-acid chain: Small ribosomal subunit protein eS8 (204 aa).

This sequence belongs to the eukaryotic ribosomal protein eS8 family.

This chain is Small ribosomal subunit protein eS8 (RPS8), found in Griffithsia japonica (Red alga).